Here is a 579-residue protein sequence, read N- to C-terminus: Deleted in azoospermia protein 4 (579 aa).

Polar residues predominate over residues Met1 to Asn10. Residues Met1 to Ser27 are disordered. Residues Ser11 to Ser27 are compositionally biased toward low complexity. Residues Asn40–Arg115 enclose the RRM 1 domain. The segment covering Gln163–Asn175 has biased composition (polar residues). The disordered stretch occupies residues Gln163 to Ser192. Residues Ser176–Ser192 are compositionally biased toward low complexity. Residues Asn205–Arg280 form the RRM 2 domain. DAZ domains are found at residues Ala332–Gln355, Glu356–Gln379, Pro380–Gln403, Ala404–Gln427, Pro428–Gln451, Ala452–Gln475, Ala476–Gln499, Ala500–Gln523, and Ala524–Gln547.

Belongs to the RRM DAZ family. Forms a heterodimer with BOLL and DAZL. Interacts with PUM2, DAZAP1, DAZAP2, DZIP1 and DZIP3. In terms of tissue distribution, testis-specific. Expression restricted to premeiotic germ cells, particularly in spermatogonia (at protein level).

The protein resides in the cytoplasm. Its subcellular location is the nucleus. RNA-binding protein that plays an essential role in spermatogenesis. May act by binding to the 3'-UTR of mRNAs and regulating their translation. The protein is Deleted in azoospermia protein 4 (DAZ4) of Homo sapiens (Human).